The primary structure comprises 372 residues: Serine/threonine-protein kinase 17B (372 aa).

Residues Thr33–Leu293 enclose the Protein kinase domain. ATP is bound by residues Leu39–Val47 and Lys62. Asp158 (proton acceptor) is an active-site residue. The segment at Glu305 to Ser348 is disordered. Polar residues predominate over residues Thr307–Arg319.

It belongs to the protein kinase superfamily. CAMK Ser/Thr protein kinase family. DAP kinase subfamily. As to quaternary structure, interacts with CHP1; the interaction induces CHP1 to translocate from the Golgi to the nucleus. Post-translationally, autophosphorylated.

The protein localises to the nucleus. Its subcellular location is the cell membrane. It is found in the endoplasmic reticulum-Golgi intermediate compartment. The enzyme catalyses L-seryl-[protein] + ATP = O-phospho-L-seryl-[protein] + ADP + H(+). It catalyses the reaction L-threonyl-[protein] + ATP = O-phospho-L-threonyl-[protein] + ADP + H(+). Its function is as follows. Acts as a positive regulator of apoptosis. Phosphorylates myosin light chains. In Mus musculus (Mouse), this protein is Serine/threonine-protein kinase 17B (Stk17b).